Consider the following 113-residue polypeptide: Transcription initiation factor IIA subunit 2 (113 aa).

The protein belongs to the TFIIA subunit 2 family. TFIIA is a heterodimer of the large unprocessed subunit 1 and a small subunit gamma. It was originally believed to be a heterotrimer of an alpha, a beta and a gamma subunit.

The protein resides in the nucleus. TFIIA is a component of the transcription machinery of RNA polymerase II and plays an important role in transcriptional activation. TFIIA in a complex with TBP mediates transcriptional activity. This chain is Transcription initiation factor IIA subunit 2, found in Caenorhabditis elegans.